The sequence spans 529 residues: Bifunctional purine biosynthesis protein PurH (529 aa).

Positions 1-148 (MQQRRPIRRA…KNHKDVAIVV (148 aa)) constitute an MGS-like domain.

Belongs to the PurH family.

It carries out the reaction (6R)-10-formyltetrahydrofolate + 5-amino-1-(5-phospho-beta-D-ribosyl)imidazole-4-carboxamide = 5-formamido-1-(5-phospho-D-ribosyl)imidazole-4-carboxamide + (6S)-5,6,7,8-tetrahydrofolate. The enzyme catalyses IMP + H2O = 5-formamido-1-(5-phospho-D-ribosyl)imidazole-4-carboxamide. It functions in the pathway purine metabolism; IMP biosynthesis via de novo pathway; 5-formamido-1-(5-phospho-D-ribosyl)imidazole-4-carboxamide from 5-amino-1-(5-phospho-D-ribosyl)imidazole-4-carboxamide (10-formyl THF route): step 1/1. It participates in purine metabolism; IMP biosynthesis via de novo pathway; IMP from 5-formamido-1-(5-phospho-D-ribosyl)imidazole-4-carboxamide: step 1/1. In Yersinia pseudotuberculosis serotype IB (strain PB1/+), this protein is Bifunctional purine biosynthesis protein PurH.